Consider the following 146-residue polypeptide: Angiogenin (146 aa).

An N-terminal signal peptide occupies residues 1–24 (MVMGLGLFLLVFMLGLGLTPPTLA). Q25 bears the Pyrrolidone carboxylic acid mark. H37 (proton acceptor) is an active-site residue. R45 contacts tRNA. 3 disulfides stabilise this stretch: C50-C105, C63-C116, and C81-C131. Positions 55–59 (RRRGL) match the Nucleolar localization signal motif. C105 and I127 together coordinate tRNA. The active-site Proton donor is H138.

It belongs to the pancreatic ribonuclease family. As to quaternary structure, homodimer. Interacts with RNH1; inhibiting ANG ribonuclease activity. Interacts with PCNA.

It localises to the secreted. Its subcellular location is the nucleus. It is found in the nucleolus. The protein resides in the cytoplasm. The protein localises to the stress granule. With respect to regulation, has weak tRNA ribonuclease activity by itself due to partial autoinhibition by its C-terminus, which folds into a short alpha-helix that partially occludes the substrate-binding site. In absence of stress, the ribonuclease activity is inhibited by RNH1 in the cytoplasm. In response to stress, dissociates from RNH1 in the cytoplasm and associates with cytoplasmic ribosomes with vacant A-sites: ribosomes directly activate the tRNA ribonuclease activity of ANG by refolding the C-terminal alpha-helix. In response to stress, the angiogenic activity of ANG is inhibited by RNH1 in the nucleus. In terms of biological role, secreted ribonuclease that can either promote or restrict cell proliferation of target cells, depending on the context. Endocytosed in target cells via its receptor PLXNB2 and translocates to the cytoplasm or nucleus. Under stress conditions, localizes to the cytoplasm and promotes the assembly of stress granules (SGs): specifically cleaves a subset of tRNAs within anticodon loops to produce tRNA-derived stress-induced fragments (tiRNAs), resulting in translation repression and inhibition of cell proliferation. tiRNas also prevent formation of apoptosome, thereby promoting cell survival. Preferentially cleaves RNAs between a pyrimidine and an adenosine residue, suggesting that it cleaves the anticodon loop of tRNA(Ala) (32-UUAGCAU-38) after positions 33 and 36. Cleaves a subset of tRNAs, including tRNA(Ala), tRNA(Glu), tRNA(Gly), tRNA(Lys), tRNA(Val), tRNA(His), tRNA(Asp) and tRNA(Sec). Under growth conditions and in differentiated cells, translocates to the nucleus and stimulates ribosomal RNA (rRNA) transcription, including that containing the initiation site sequences of 45S rRNA, thereby promoting cell growth and proliferation. Angiogenin induces vascularization of normal and malignant tissues via its ability to promote rRNA transcription. Involved in hematopoietic stem and progenitor cell (HSPC) growth and survival by promoting rRNA transcription in growth conditions and inhibiting translation in response to stress, respectively. Mediates the crosstalk between myeloid and intestinal epithelial cells to protect the intestinal epithelial barrier integrity: secreted by myeloid cells and promotes intestinal epithelial cells proliferation and survival. Also mediates osteoclast-endothelial cell crosstalk in growing bone: produced by osteoclasts and protects the neighboring vascular cells against senescence by promoting rRNA transcription. This Rhinopithecus avunculus (Tonkin snub-nosed monkey) protein is Angiogenin (ANG).